A 431-amino-acid chain; its full sequence is Adenylosuccinate lyase (431 aa).

Residues 4 to 5 (RY), 67 to 69 (RHD), and 93 to 94 (TS) each bind N(6)-(1,2-dicarboxyethyl)-AMP. The Proton donor/acceptor role is filled by His-141. Residue Gln-212 coordinates N(6)-(1,2-dicarboxyethyl)-AMP. Ser-262 (proton donor/acceptor) is an active-site residue. N(6)-(1,2-dicarboxyethyl)-AMP is bound by residues Ser-263, 268–270 (KRN), Asn-276, and 307–311 (SAERI).

Belongs to the lyase 1 family. Adenylosuccinate lyase subfamily. Homodimer and homotetramer. Residues from neighboring subunits contribute catalytic and substrate-binding residues to each active site.

It carries out the reaction N(6)-(1,2-dicarboxyethyl)-AMP = fumarate + AMP. The catalysed reaction is (2S)-2-[5-amino-1-(5-phospho-beta-D-ribosyl)imidazole-4-carboxamido]succinate = 5-amino-1-(5-phospho-beta-D-ribosyl)imidazole-4-carboxamide + fumarate. Its pathway is purine metabolism; AMP biosynthesis via de novo pathway; AMP from IMP: step 2/2. It participates in purine metabolism; IMP biosynthesis via de novo pathway; 5-amino-1-(5-phospho-D-ribosyl)imidazole-4-carboxamide from 5-amino-1-(5-phospho-D-ribosyl)imidazole-4-carboxylate: step 2/2. In terms of biological role, catalyzes two reactions in de novo purine nucleotide biosynthesis. Catalyzes the breakdown of 5-aminoimidazole- (N-succinylocarboxamide) ribotide (SAICAR or 2-[5-amino-1-(5-phospho-beta-D-ribosyl)imidazole-4-carboxamido]succinate) to 5-aminoimidazole-4-carboxamide ribotide (AICAR or 5-amino-1-(5-phospho-beta-D-ribosyl)imidazole-4-carboxamide) and fumarate, and of adenylosuccinate (ADS or N(6)-(1,2-dicarboxyethyl)-AMP) to adenosine monophosphate (AMP) and fumarate. The polypeptide is Adenylosuccinate lyase (purB) (Staphylococcus haemolyticus (strain JCSC1435)).